The sequence spans 297 residues: Bifunctional protein FolD 2 (297 aa).

NADP(+)-binding positions include 173-175 (GKS), serine 198, and isoleucine 239.

It belongs to the tetrahydrofolate dehydrogenase/cyclohydrolase family. In terms of assembly, homodimer.

It carries out the reaction (6R)-5,10-methylene-5,6,7,8-tetrahydrofolate + NADP(+) = (6R)-5,10-methenyltetrahydrofolate + NADPH. It catalyses the reaction (6R)-5,10-methenyltetrahydrofolate + H2O = (6R)-10-formyltetrahydrofolate + H(+). Its pathway is one-carbon metabolism; tetrahydrofolate interconversion. Its function is as follows. Catalyzes the oxidation of 5,10-methylenetetrahydrofolate to 5,10-methenyltetrahydrofolate and then the hydrolysis of 5,10-methenyltetrahydrofolate to 10-formyltetrahydrofolate. This Sinorhizobium medicae (strain WSM419) (Ensifer medicae) protein is Bifunctional protein FolD 2.